We begin with the raw amino-acid sequence, 102 residues long: Omega-hexatoxin-Hi2a (102 aa).

The signal sequence occupies residues 1-23 (MKFSKLSLTLALILTQALLVVCG). Positions 24–56 (KINEDFMENGLESHALHDEIRKPIDTEKADAER) are excised as a propeptide. 3 disulfides stabilise this stretch: Cys61–Cys75, Cys68–Cys81, and Cys74–Cys86. The residue at position 98 (Leu98) is a Leucine amide. The propeptide occupies 100 to 102 (RAL).

The protein belongs to the neurotoxin 15 family. 02 (omega-actx) subfamily. Expressed by the venom gland.

It localises to the secreted. Potent inhibitor of insect, but not mammalian, voltage-gated calcium channels (Cav). This Hadronyche infensa (Fraser island funnel-web spider) protein is Omega-hexatoxin-Hi2a.